The primary structure comprises 327 residues: DNA-directed RNA polymerase subunit alpha (327 aa).

An alpha N-terminal domain (alpha-NTD) region spans residues 1-233 (MQNSASEFLK…DQLSIFADLQ (233 aa)). The tract at residues 247 to 327 (IDPILLRPVD…NWPPAGLEKP (81 aa)) is alpha C-terminal domain (alpha-CTD).

This sequence belongs to the RNA polymerase alpha chain family. In terms of assembly, homodimer. The RNAP catalytic core consists of 2 alpha, 1 beta, 1 beta' and 1 omega subunit. When a sigma factor is associated with the core the holoenzyme is formed, which can initiate transcription.

It catalyses the reaction RNA(n) + a ribonucleoside 5'-triphosphate = RNA(n+1) + diphosphate. In terms of biological role, DNA-dependent RNA polymerase catalyzes the transcription of DNA into RNA using the four ribonucleoside triphosphates as substrates. The protein is DNA-directed RNA polymerase subunit alpha of Chromobacterium violaceum (strain ATCC 12472 / DSM 30191 / JCM 1249 / CCUG 213 / NBRC 12614 / NCIMB 9131 / NCTC 9757 / MK).